A 161-amino-acid chain; its full sequence is Nucleotide-binding protein PFL_4775 (161 aa).

This sequence belongs to the YajQ family.

Its function is as follows. Nucleotide-binding protein. The polypeptide is Nucleotide-binding protein PFL_4775 (Pseudomonas fluorescens (strain ATCC BAA-477 / NRRL B-23932 / Pf-5)).